Consider the following 397-residue polypeptide: 3-hydroxy-3-methylglutaryl-coenzyme A reductase (397 aa).

Residues Glu-96 and Asp-301 each act as charge relay system in the active site. His-391 (proton donor) is an active-site residue.

This sequence belongs to the HMG-CoA reductase family.

It catalyses the reaction (R)-mevalonate + 2 NADP(+) + CoA = (3S)-3-hydroxy-3-methylglutaryl-CoA + 2 NADPH + 2 H(+). The protein operates within metabolic intermediate biosynthesis; (R)-mevalonate biosynthesis; (R)-mevalonate from acetyl-CoA: step 3/3. Converts HMG-CoA to mevalonate. The chain is 3-hydroxy-3-methylglutaryl-coenzyme A reductase (hmgA) from Methanothermobacter thermautotrophicus (strain ATCC 29096 / DSM 1053 / JCM 10044 / NBRC 100330 / Delta H) (Methanobacterium thermoautotrophicum).